Here is a 194-residue protein sequence, read N- to C-terminus: MRKWILTWILPTLLYRSCFHIICLVGTISLACNDMTPEQMATNVNCSSPERHTRSYDYMEGGDIRVRRLFCRTQWYLRIDKRGKVKGTQEMKNSYNIMEIRTVAVGIVAIKGVESEYYLAMNKEGKLYAKKECNEDCNFKELILENHYNTYASAKWTHSGGEMFVALNQKGVPVRGKKTKKEQKTAHFLPMAIT.

Residues 1–31 (MRKWILTWILPTLLYRSCFHIICLVGTISLA) form the signal peptide. An N-linked (GlcNAc...) asparagine glycan is attached at Asn-45.

This sequence belongs to the heparin-binding growth factors family. As to quaternary structure, interacts with FGFBP1. Interacts with FGFR2. Affinity between fibroblast growth factors (FGFs) and their receptors is increased by heparan sulfate glycosaminoglycans that function as coreceptors.

The protein resides in the secreted. In terms of biological role, plays an important role in the regulation of embryonic development, cell proliferation and cell differentiation. Required for normal branching morphogenesis. Growth factor active on keratinocytes. Possible major paracrine effector of normal epithelial cell proliferation. This is Fibroblast growth factor 7 (FGF7) from Canis lupus familiaris (Dog).